A 2753-amino-acid chain; its full sequence is Maltase-glucoamylase (2753 aa).

Residues 1 to 13 lie on the Cytoplasmic side of the membrane; the sequence is MARKKLKKFTTLE. Residues 14-34 form a helical; Signal-anchor for type II membrane protein membrane-spanning segment; the sequence is IVLSVLLLVLFIISIVLIVLL. Topologically, residues 35 to 2753 are lumenal; sequence AKESLKSTAP…FTSLTWISTL (2719 aa). The tract at residues 41–87 is disordered; it reads STAPDPGTTGTPDPGTTGTPDPGTTGTTHARTTGPPDPGTTGTTPVS. Low complexity predominate over residues 44-85; sequence PDPGTTGTPDPGTTGTPDPGTTGTTHARTTGPPDPGTTGTTP. The P-type 1 domain occupies 88–134; the sequence is AECPVVNELERINCIPDQPPTKATCDQRGCCWNPQGAVSVPWCYYSK. 3 cysteine pairs are disulfide-bonded: Cys90/Cys118, Cys101/Cys117, and Cys112/Cys130. Asn135 carries an N-linked (GlcNAc...) asparagine glycan. An acarbose-binding site is contributed by Asp289. A glycan (N-linked (GlcNAc...) asparagine) is linked at Asn295. Residues 356–737 are maltase; it reads PEQVVQEYLE…FRAHSRGDTV (382 aa). Asp413 contributes to the acarbose binding site. 2 positions are modified to sulfotyrosine: Tyr416 and Tyr425. 3 N-linked (GlcNAc...) asparagine glycosylation sites follow: Asn457, Asn458, and Asn479. Asp529 serves as the catalytic Nucleophile. Glu532 is an active-site residue. Residues Arg612 and Asp628 each contribute to the acarbose site. Residues Cys659 and Cys670 are joined by a disulfide bond. His686 is an acarbose binding site. 8 N-linked (GlcNAc...) asparagine glycosylation sites follow: Asn707, Asn749, Asn827, Asn885, Asn912, Asn977, Asn989, and Asn1255. The region spanning 954–1000 is the P-type 2 domain; sequence WSIKIRDEEKIDCYPDENGASAENCTARGCIWEASNSSGVPFCYFVN. 2 disulfide bridges follow: Cys966–Cys983 and Cys978–Cys996. The segment at 1221-1632 is glucoamylase; it reads TPELVTQQYT…MQKAHTEGVT (412 aa). Tyr1282 bears the Sulfotyrosine mark. N-linked (GlcNAc...) asparagine glycans are attached at residues Asn1323, Asn1364, and Asn1388. Catalysis depends on Asp1420, which acts as the Nucleophile. Glu1423 is a catalytic residue. Asp1526 acts as the Proton donor in catalysis. The region spanning 1850 to 1896 is the P-type 3 domain; that stretch reads WSIKIRDEEKIDCYPDENGDSAENCTARGCIWEASNSSGVPFCYFVN. Intrachain disulfides connect Cys1862-Cys1879 and Cys1874-Cys1892. Residues Asn2499, Asn2568, Asn2738, and Asn2743 are each glycosylated (N-linked (GlcNAc...) asparagine).

It belongs to the glycosyl hydrolase 31 family. As to quaternary structure, monomer. Post-translationally, N- and O-glycosylated. In terms of processing, does not undergo intracellular or extracellular proteolytic cleavage. Sulfated. Broadly expressed. Highly expressed in small intestine. Expressed in granulocytes.

The protein resides in the apical cell membrane. The enzyme catalyses Hydrolysis of terminal, non-reducing (1-&gt;4)-linked alpha-D-glucose residues with release of alpha-D-glucose.. The catalysed reaction is D-maltoheptaose + H2O = D-maltohexaose + alpha-D-glucose. It catalyses the reaction D-maltohexaose + H2O = D-maltopentaose + alpha-D-glucose. It carries out the reaction D-maltopentaose + H2O = D-maltotetraose + alpha-D-glucose. The enzyme catalyses D-maltotetraose + H2O = D-maltotriose + alpha-D-glucose. The catalysed reaction is D-maltotriose + H2O = D-maltose + alpha-D-glucose. It catalyses the reaction D-maltose + H2O = alpha-D-glucose + D-glucose. It carries out the reaction nigerose + H2O = alpha-D-glucose + D-glucose. The enzyme catalyses kojibiose + H2O = alpha-D-glucose + D-glucose. The catalysed reaction is isomaltose + H2O = alpha-D-glucose + D-glucose. It catalyses the reaction 6-O-alpha-D-glucopyranosyl-D-fructose + H2O = alpha-D-glucose + D-fructose. Its pathway is carbohydrate degradation. With respect to regulation, down-regulated at high oligomaltose concentration as it occurs during the mealtime. Down-regulated by anti-diabetic drug acarbose. Alpha-(1,4) exo-glucosidase involved in breakdown of dietary starch oligosaccharides in small intestine. Cleaves the non-reducing alpha-(1,4)-linked glucose residue in linear dextrins with retention of anomeric center stereochemistry. Mainly hydrolyzes short length oligomaltoses having two to seven glucose residues. Can cleave alpha-(1,2), alpha-(1,3) and alpha-(1,6) glycosidic linkages with lower efficiency, whereas beta glycosidic linkages are usually not hydrolyzed. The sequence is that of Maltase-glucoamylase from Homo sapiens (Human).